Consider the following 447-residue polypeptide: GTPase Der (447 aa).

EngA-type G domains lie at 3–167 (PVIA…VQER) and 181–354 (VKIA…AAAM). GTP is bound by residues 9 to 16 (GRPNVGKS), 56 to 60 (DTGGF), 119 to 122 (NKAE), 187 to 194 (GRPNVGKS), 234 to 238 (DTAGL), and 299 to 302 (NKWD). The 85-residue stretch at 355 to 439 (VKLPTPQLTR…PLRIEFRTNK (85 aa)) folds into the KH-like domain.

It belongs to the TRAFAC class TrmE-Era-EngA-EngB-Septin-like GTPase superfamily. EngA (Der) GTPase family. Associates with the 50S ribosomal subunit.

GTPase that plays an essential role in the late steps of ribosome biogenesis. This is GTPase Der from Cupriavidus pinatubonensis (strain JMP 134 / LMG 1197) (Cupriavidus necator (strain JMP 134)).